We begin with the raw amino-acid sequence, 405 residues long: MSTTGPLDATLIRDVAVATATKASYDMSDTLYSYLPKVDQFYIPEWLTMQFIANNLISFTPLFSYGTTIISIEKCKTALGFSIDICATMLIASILRISYYLITPYEITLLRQSLVMIFIQLILLRTSLKYRPDEYKYQNLTDVESLSHLIHDIWFEFFSCINRPKFLSEDWKNLIKSLSFTNLLKFSFKIFLAFFYKILKFFDPNFKRIGAFWQWDDDKNFWRFLALFATVQILVTFFISNILNWDSLAQGLGSIIGSLGLLVESLLPLPQIAILYKLKSVQGFKLILLVSWLCGDTLKITYLIFGAKNISALFVIFALFQMSLDFYIGGQYIYYRYYYPKLRHQHHPNDSNSPSDEDESEMYELDLFNTLQKDVEKALKQDSNDTSDSPQDDQVGKSQAQAVTL.

Residues 1–51 (MSTTGPLDATLIRDVAVATATKASYDMSDTLYSYLPKVDQFYIPEWLTMQF) are Cytoplasmic-facing. A helical membrane pass occupies residues 52–72 (IANNLISFTPLFSYGTTIISI). Residues 73-76 (EKCK) are Lumenal-facing. A helical membrane pass occupies residues 77 to 97 (TALGFSIDICATMLIASILRI). At 98–103 (SYYLIT) the chain is on the cytoplasmic side. A helical transmembrane segment spans residues 104 to 124 (PYEITLLRQSLVMIFIQLILL). Topologically, residues 125–177 (RTSLKYRPDEYKYQNLTDVESLSHLIHDIWFEFFSCINRPKFLSEDWKNLIKS) are lumenal. Residues 178–198 (LSFTNLLKFSFKIFLAFFYKI) traverse the membrane as a helical segment. Over 199–223 (LKFFDPNFKRIGAFWQWDDDKNFWR) the chain is Cytoplasmic. The helical transmembrane segment at 224–244 (FLALFATVQILVTFFISNILN) threads the bilayer. The Lumenal portion of the chain corresponds to 245-254 (WDSLAQGLGS). Positions 252 to 309 (LGSIIGSLGLLVESLLPLPQIAILYKLKSVQGFKLILLVSWLCGDTLKITYLIFGAKN) constitute a PQ-loop domain. A helical transmembrane segment spans residues 255–275 (IIGSLGLLVESLLPLPQIAIL). Residues 276–283 (YKLKSVQG) are Cytoplasmic-facing. The helical transmembrane segment at 284–306 (FKLILLVSWLCGDTLKITYLIFG) threads the bilayer. Topologically, residues 307–312 (AKNISA) are lumenal. Residues 313 to 335 (LFVIFALFQMSLDFYIGGQYIYY) traverse the membrane as a helical segment. Residues 336–405 (RYYYPKLRHQ…GKSQAQAVTL (70 aa)) are Cytoplasmic-facing. The disordered stretch occupies residues 379-405 (LKQDSNDTSDSPQDDQVGKSQAQAVTL). Positions 396-405 (GKSQAQAVTL) are enriched in polar residues.

In terms of assembly, interacts with NEO1.

It localises to the golgi apparatus membrane. The protein localises to the late endosome membrane. In terms of biological role, phospholipid scramblase that transports phosphatidylserine (PS) and phosphatidylethalonamine (PE) bidirectionally from one leaflet to the other of the phospholipid bilayer to at least partially collapse the membrane asymmetry established by NEO1 and other flippases. The PS scramblase activity has been disputed. Functions in the trafficking pathway from endosomes to the trans-Golgi network (TGN). The chain is Scramblase ANY1 from Saccharomyces cerevisiae (strain ATCC 204508 / S288c) (Baker's yeast).